A 217-amino-acid chain; its full sequence is External core antigen (217 aa).

A signal peptide spans 1–20; sequence MYLFHLCLVFACVSCPTVQA. An HBEAG region spans residues 26–28; the sequence is GWL. Positions 181–210 are enriched in basic residues; the sequence is RRGSARVVRSPRRRTPSPRRRRSQSPRRRP. The interval 181 to 217 is disordered; that stretch reads RRGSARVVRSPRRRTPSPRRRRSQSPRRRPQSPASNC. A 1; half-length repeat occupies 190-196; the sequence is SPRRRTP. Residues 190–211 are 3 X 8 AA approximate repeats of S-P-R-R-R-R-[PS]-Q; the sequence is SPRRRTPSPRRRRSQSPRRRPQ. Residues 190-217 constitute a propeptide that is removed on maturation; it reads SPRRRTPSPRRRRSQSPRRRPQSPASNC. 2 repeat units span residues 197 to 204 and 205 to 211.

The protein belongs to the orthohepadnavirus precore antigen family. Homodimerizes. Post-translationally, phosphorylated. Cleaved by host furin.

It localises to the secreted. Its subcellular location is the host nucleus. May regulate immune response to the intracellular capsid in acting as a T-cell tolerogen, by having an immunoregulatory effect which prevents destruction of infected cells by cytotoxic T-cells. This immune regulation may predispose to chronicity during perinatal infections and prevent severe liver injury during adult infections. In Urocitellus parryii kennicottii (ASHV), this protein is External core antigen.